Reading from the N-terminus, the 36-residue chain is Photosystem I reaction center subunit VIII (36 aa).

A helical membrane pass occupies residues 9–29 (IFVPLVGLVFPAVAMASLFLY).

The protein belongs to the PsaI family.

Its subcellular location is the plastid. It localises to the chloroplast thylakoid membrane. In terms of biological role, may help in the organization of the PsaL subunit. This is Photosystem I reaction center subunit VIII from Ostreococcus tauri.